The sequence spans 534 residues: Autophagic-related protein 16.2 (534 aa).

7 WD repeats span residues 243-281, 288-329, 330-368, 371-411, 413-452, 459-498, and 504-534; these read THDGEVHDVEWMSDDTFATAGSDSKVQIWRVSPNKTDAS, GCLG…STFS, GHTDKVSSARLFQSHNVISGSADRTIKNWDISSIRCLKS, VGST…ATYS, ELGQKVSSLDISMDGLQVLASSRDDTLSLIDVRNYGIIHL, KTSCDSTRAIFSSTGEYVLAGSSNSSVFIWNTKTTKLEKV, and SDSAQIMSLAWNPSGRGLLACDRQKTCTLWR.

The protein belongs to the WD repeat tipD family. As to quaternary structure, homodimer (via N-terminus). Most likely a component of a complex at least containing atg-5, lgg-3, atg-16.1 and/or atg-16.2. Interacts (via N-terminus) with atg-16.1 (via N-terminus). Interacts (via N-terminus) with atg-5. Interacts (via WD 5-6 repeats) with lgg-2; the interaction is direct. As to expression, expressed in neurons, pharyngeal muscles, body wall muscle cells and intestinal cells.

Its subcellular location is the cytoplasm. The protein localises to the cell membrane. In terms of biological role, most likely a component of the atg-5-atg-12-atg-16.1/atg-16.2 complex, which is recruited to the preautophagosomal membrane and associates with lgg-2 to promote autophagosome formation. Plays a role in the recruitment of lipidated lgg-1 probably to the autophagosome membrane to promote autophagosome formation. Furthermore, association with atg-5 is required for the nucleation of lgg-1 positive autophagosomes. Although its role in autophagosome formation may be distinct to the role of atg-16.2, it functions in a partially redundant manner with atg-16.1 to regulate autophagic processes. In a daf-18/PTEN- and daf-16/FOXO-dependent manner, required for maintaining the numbers of germ stem cell progenitors in the gonad during the late phases of larval development. The sequence is that of Autophagic-related protein 16.2 from Caenorhabditis elegans.